Here is a 101-residue protein sequence, read N- to C-terminus: MSETEREDERWTPPIGPIDPEHPECAAVIAEVWTLLDGECTPETRDKLKQHLEECPTCLRHYGIEERVKRLIAAKCSGEKAPDSLRERLRIQISRTTIIRG.

Residues 1–20 (MSETEREDERWTPPIGPIDP) form a disordered region. Iron-sulfur cluster contacts are provided by Cys-25, His-51, Cys-55, and Cys-58. The residue at position 96 (Thr-96) is a Phosphothreonine.

This sequence belongs to the zinc-associated anti-sigma factor (ZAS) superfamily. In terms of assembly, interacts with cognate ECF RNA polymerase sigma factor SigH under reducing conditions; the complex is disrupted under oxiding conditions or as temperatures rise. Binding inhibits the interaction of SigH with the RNA polymerase catalytic core. The cofactor is iron-sulfur cluster. Post-translationally, phosphorylated, probably by PknB. Phosphorylation decreases interaction with SigH, probably leading to increased SigH-mediated transcription.

A redox-regulated anti-sigma factor for cognate extracytoplasmic function (ECF) sigma factor SigH. ECF sigma factors are held in an inactive form by an anti-sigma factor. Overexpression leads to increased susceptibility to diamide. In Mycolicibacterium smegmatis (strain ATCC 700084 / mc(2)155) (Mycobacterium smegmatis), this protein is Anti-sigma factor RshA (rshA).